A 166-amino-acid chain; its full sequence is 3-isopropylmalate dehydratase small subunit (166 aa).

Belongs to the LeuD family. LeuD type 2 subfamily. As to quaternary structure, heterodimer of LeuC and LeuD.

The catalysed reaction is (2R,3S)-3-isopropylmalate = (2S)-2-isopropylmalate. It functions in the pathway amino-acid biosynthesis; L-leucine biosynthesis; L-leucine from 3-methyl-2-oxobutanoate: step 2/4. In terms of biological role, catalyzes the isomerization between 2-isopropylmalate and 3-isopropylmalate, via the formation of 2-isopropylmaleate. In Moorella thermoacetica (strain ATCC 39073 / JCM 9320), this protein is 3-isopropylmalate dehydratase small subunit.